Consider the following 370-residue polypeptide: Phosphoserine aminotransferase (370 aa).

Position 1 is an N-acetylmethionine (Met-1). 2 residues coordinate O-phospho-L-serine: His-44 and Arg-45. Lys-51 bears the N6-acetyllysine mark. Residues Gly-79 and Trp-107 each contribute to the pyridoxal 5'-phosphate site. The residue at position 127 (Lys-127) is an N6-acetyllysine. Thr-156, Asp-176, and Gln-199 together coordinate pyridoxal 5'-phosphate. At Lys-200 the chain carries N6-(pyridoxal phosphate)lysine. Residues Asn-241 and Thr-242 each coordinate pyridoxal 5'-phosphate. 3 positions are modified to N6-acetyllysine: Lys-269, Lys-318, and Lys-323. The residue at position 331 (Ser-331) is a Phosphoserine. At Lys-333 the chain carries N6-acetyllysine. O-phospho-L-serine is bound by residues His-335, Arg-336, and Arg-342.

Belongs to the class-V pyridoxal-phosphate-dependent aminotransferase family. SerC subfamily. Homodimer. Pyridoxal 5'-phosphate is required as a cofactor.

The catalysed reaction is O-phospho-L-serine + 2-oxoglutarate = 3-phosphooxypyruvate + L-glutamate. The protein operates within amino-acid biosynthesis; L-serine biosynthesis; L-serine from 3-phospho-D-glycerate: step 2/3. Involved in L-serine biosynthesis via the phosphorylated pathway, a three-step pathway converting the glycolytic intermediate 3-phospho-D-glycerate into L-serine. Catalyzes the second step, that is the pyridoxal 5'-phosphate-dependent transamination of 3-phosphohydroxypyruvate and L-glutamate to O-phosphoserine (OPS) and alpha-ketoglutarate. The protein is Phosphoserine aminotransferase of Mus musculus (Mouse).